We begin with the raw amino-acid sequence, 456 residues long: Putrescine--pyruvate aminotransferase (456 aa).

Residue Y156 coordinates substrate. Pyridoxal 5'-phosphate is bound at residue D262. Residue K291 is modified to N6-(pyridoxal phosphate)lysine. Residues G322 and R417 each coordinate substrate.

The protein belongs to the class-III pyridoxal-phosphate-dependent aminotransferase family. It depends on pyridoxal 5'-phosphate as a cofactor.

The catalysed reaction is putrescine + pyruvate = 4-aminobutanal + L-alanine. It participates in amine and polyamine degradation; putrescine degradation; 4-aminobutanal from putrescine (transaminase route). In terms of biological role, involved in the putrescine catabolism. Catalyzes the transfer of the amino group from putrescine to pyruvate to yield 4-aminobutanal and alanine. This chain is Putrescine--pyruvate aminotransferase, found in Pseudomonas aeruginosa (strain ATCC 15692 / DSM 22644 / CIP 104116 / JCM 14847 / LMG 12228 / 1C / PRS 101 / PAO1).